The following is a 144-amino-acid chain: Cysteine-rich tail protein 1 (144 aa).

The tract at residues 51 to 105 is disordered; it reads APEPTHLLQPTEVPGPKGAKGNQGAAPIQNQQAWQQPGNPYSSSQRQAGLTYAGP. Polar residues predominate over residues 78 to 98; that stretch reads IQNQQAWQQPGNPYSSSQRQA.

The protein belongs to the CYSRT1 family. In terms of assembly, interacts with LCE1B; the interaction is direct. Interacts with LCE2C; the interaction is direct. Interacts with LCE3A; the interaction is direct. Interacts with LCE3C; the interaction is direct. Interacts with LCE4A; the interaction is direct. Interacts with LCE5A; the interaction is direct. Interacts with LCE1C. Interacts with LCE1D. Interacts with LCE1E. Interacts with LCE2A. Interacts with LCE3D. Interacts with LCE3E. Interacts with LCE1A. In terms of tissue distribution, expressed in the stratum granulosum, in skin and oral epithelia (at protein level).

It is found in the cornified envelope. Component of the stratum corneum that may contribute to epidermal antimicrobial host defenses. The protein is Cysteine-rich tail protein 1 (CYSRT1) of Homo sapiens (Human).